Here is a 310-residue protein sequence, read N- to C-terminus: Oxygen-dependent coproporphyrinogen-III oxidase (310 aa).

S93 is a binding site for substrate. 2 residues coordinate a divalent metal cation: H97 and H107. H107 acts as the Proton donor in catalysis. 109–111 lines the substrate pocket; sequence NVR. A divalent metal cation-binding residues include H146 and H176. Residues 241–276 form an important for dimerization region; that stretch reads YVEFNLVYDRGTLFGLQSGGRTESILMSLPPQVRWS. 259 to 261 contacts substrate; that stretch reads GGR.

The protein belongs to the aerobic coproporphyrinogen-III oxidase family. Homodimer. The cofactor is a divalent metal cation.

The protein resides in the cytoplasm. It carries out the reaction coproporphyrinogen III + O2 + 2 H(+) = protoporphyrinogen IX + 2 CO2 + 2 H2O. It participates in porphyrin-containing compound metabolism; protoporphyrin-IX biosynthesis; protoporphyrinogen-IX from coproporphyrinogen-III (O2 route): step 1/1. Functionally, involved in the heme biosynthesis. Catalyzes the aerobic oxidative decarboxylation of propionate groups of rings A and B of coproporphyrinogen-III to yield the vinyl groups in protoporphyrinogen-IX. The sequence is that of Oxygen-dependent coproporphyrinogen-III oxidase from Pseudomonas fluorescens (strain SBW25).